The following is a 78-amino-acid chain: U7-lycotoxin-Ls1e (78 aa).

The N-terminal stretch at 1–22 (MKLIIFTGLALLLIVSLIDVEA) is a signal peptide. Residues 23–26 (QNEG) constitute a propeptide that is removed on maturation.

It belongs to the neurotoxin 19 (CSTX) family. 07 (U7-Lctx) subfamily. Contains 4 disulfide bonds. As to expression, expressed by the venom gland.

The protein localises to the secreted. The chain is U7-lycotoxin-Ls1e from Lycosa singoriensis (Wolf spider).